Reading from the N-terminus, the 82-residue chain is Hydrogenase maturation factor HybG (82 aa).

Belongs to the HupF/HypC family.

Its pathway is protein modification; [NiFe] hydrogenase maturation. Its function is as follows. Involved in the maturation of [NiFe] hydrogenases. Involved in the biosynthesis of the Fe(CN)(2)CO cofactor. HybG delivers iron-bound CO(2) to HypD where reduction to CO probably occurs. In complex with HypD, accepts the cyanide ligand generated by HypF and HypE, and also coordinates the carbon monoxide ligand. This is Hydrogenase maturation factor HybG (hybG) from Escherichia coli O157:H7.